The primary structure comprises 486 residues: Hydrogenobyrinate a,c-diamide synthase (486 aa).

Residues 254–272 are compositionally biased toward pro residues; that stretch reads SPPPPLPVPSPGAAPPDPL. Residues 254 to 284 are disordered; sequence SPPPPLPVPSPGAAPPDPLVRPGRPRPQAPD. Positions 289–474 constitute a GATase cobBQ-type domain; the sequence is RVAMASGAAF…LHTHWAAEPG (186 aa). Cys-372 (nucleophile) is an active-site residue.

It belongs to the CobB/CbiA family. The cofactor is Mg(2+).

It carries out the reaction hydrogenobyrinate + 2 L-glutamine + 2 ATP + 2 H2O = hydrogenobyrinate a,c-diamide + 2 L-glutamate + 2 ADP + 2 phosphate + 2 H(+). Its pathway is cofactor biosynthesis; adenosylcobalamin biosynthesis; cob(II)yrinate a,c-diamide from precorrin-2 (aerobic route): step 9/10. Functionally, catalyzes the ATP-dependent amidation of the two carboxylate groups at positions a and c of hydrogenobyrinate, using either L-glutamine or ammonia as the nitrogen source. The chain is Hydrogenobyrinate a,c-diamide synthase from Streptomyces coelicolor (strain ATCC BAA-471 / A3(2) / M145).